A 104-amino-acid chain; its full sequence is Large ribosomal subunit protein uL24 (104 aa).

The protein belongs to the universal ribosomal protein uL24 family. As to quaternary structure, part of the 50S ribosomal subunit.

In terms of biological role, one of two assembly initiator proteins, it binds directly to the 5'-end of the 23S rRNA, where it nucleates assembly of the 50S subunit. One of the proteins that surrounds the polypeptide exit tunnel on the outside of the subunit. The protein is Large ribosomal subunit protein uL24 of Pseudomonas fluorescens (strain SBW25).